A 167-amino-acid chain; its full sequence is Signal peptidase complex catalytic subunit SEC11 (167 aa).

The Cytoplasmic portion of the chain corresponds to 1–12 (MNLRLELTRFLK). A helical; Signal-anchor for type II membrane protein membrane pass occupies residues 13-30 (LCFVLSSAFMFWKGLSIA). The Lumenal segment spans residues 31–167 (TNSHSPIVVV…LGISALLSNE (137 aa)). Catalysis depends on charge relay system residues S44, H83, and D109. Positions 153–164 (ALMGFLGISALL) are C-terminal short (CTS) helix.

It belongs to the peptidase S26B family. As to quaternary structure, component of the signal peptidase complex (SPC) composed of a catalytic subunit SEC11 and three accessory subunits SPC1, SPC2 and SPC3. The complex induces a local thinning of the ER membrane which is used to measure the length of the signal peptide (SP) h-region of protein substrates. This ensures the selectivity of the complex towards h-regions shorter than 18-20 amino acids. SPC associates with the translocon complex.

It is found in the endoplasmic reticulum membrane. The enzyme catalyses Cleavage of hydrophobic, N-terminal signal or leader sequences from secreted and periplasmic proteins.. Its function is as follows. Catalytic component of the signal peptidase complex (SPC) which catalyzes the cleavage of N-terminal signal sequences from nascent proteins as they are translocated into the lumen of the endoplasmic reticulum. Specifically cleaves N-terminal signal peptides that contain a hydrophobic alpha-helix (h-region) shorter than 18-20 amino acids. The sequence is that of Signal peptidase complex catalytic subunit SEC11 (SEC11) from Zygosaccharomyces rouxii (strain ATCC 2623 / CBS 732 / NBRC 1130 / NCYC 568 / NRRL Y-229).